The primary structure comprises 340 residues: Ketol-acid reductoisomerase (NADP(+)) (340 aa).

A KARI N-terminal Rossmann domain is found at 1–182; that stretch reads MRVYYDRDCD…GGGRSGIIET (182 aa). NADP(+) contacts are provided by residues 24–27, arginine 48, serine 51, serine 53, and 83–86; these read YGSQ and DELQ. Histidine 108 is a catalytic residue. Glycine 134 contributes to the NADP(+) binding site. The region spanning 183–329 is the KARI C-terminal knotted domain; sequence NFREECETDL…KELRGMMPWI (147 aa). Residues aspartate 191, glutamate 195, glutamate 227, and glutamate 231 each contribute to the Mg(2+) site. Substrate is bound at residue serine 252.

It belongs to the ketol-acid reductoisomerase family. Mg(2+) is required as a cofactor.

It catalyses the reaction (2R)-2,3-dihydroxy-3-methylbutanoate + NADP(+) = (2S)-2-acetolactate + NADPH + H(+). The catalysed reaction is (2R,3R)-2,3-dihydroxy-3-methylpentanoate + NADP(+) = (S)-2-ethyl-2-hydroxy-3-oxobutanoate + NADPH + H(+). Its pathway is amino-acid biosynthesis; L-isoleucine biosynthesis; L-isoleucine from 2-oxobutanoate: step 2/4. It participates in amino-acid biosynthesis; L-valine biosynthesis; L-valine from pyruvate: step 2/4. Involved in the biosynthesis of branched-chain amino acids (BCAA). Catalyzes an alkyl-migration followed by a ketol-acid reduction of (S)-2-acetolactate (S2AL) to yield (R)-2,3-dihydroxy-isovalerate. In the isomerase reaction, S2AL is rearranged via a Mg-dependent methyl migration to produce 3-hydroxy-3-methyl-2-ketobutyrate (HMKB). In the reductase reaction, this 2-ketoacid undergoes a metal-dependent reduction by NADPH to yield (R)-2,3-dihydroxy-isovalerate. The chain is Ketol-acid reductoisomerase (NADP(+)) from Dinoroseobacter shibae (strain DSM 16493 / NCIMB 14021 / DFL 12).